Reading from the N-terminus, the 391-residue chain is MILNCPHFQQQDCVSCQWLEKPYATQLTDKEIDLKRLISPFILQNFTEILPPVQSSQKQFRNKAKMVVSGSVERPILGILKDQIDPQSGIDLCDCPLYPTEFEAIFPILKDFIARAGLVPYNIAKKKGELKYILLTQSRYNQSVMLRFVLRSEQKRPLVERELPNLLAKLPKDSVVSLNIQPQHAAILEGETEIFLTEKTTIEENFNDIPLFIRPQGFFQTNPNVASRLYATAQNWIKDLPIQQFWDLFCGVGGFGLHCAKALQEKNENVQLTGIEISASAIASATQSAAQLQLKNVTFASLDSAQFALNDKGKSPDLVIVNPPRRGIGKPLAEFLNELGTPYLIYSSCNAQTMAKDFEALSNYSLQKVQLFDMFPHTSHYEVLTFLVKKS.

[4Fe-4S] cluster-binding residues include Cys-5, Cys-13, Cys-16, and Cys-95. Positions 220, 249, 276, and 322 each coordinate S-adenosyl-L-methionine. Cys-349 functions as the Nucleophile in the catalytic mechanism.

Belongs to the class I-like SAM-binding methyltransferase superfamily. RNA M5U methyltransferase family. RlmC subfamily.

It catalyses the reaction uridine(747) in 23S rRNA + S-adenosyl-L-methionine = 5-methyluridine(747) in 23S rRNA + S-adenosyl-L-homocysteine + H(+). In terms of biological role, catalyzes the formation of 5-methyl-uridine at position 747 (m5U747) in 23S rRNA. In Actinobacillus pleuropneumoniae serotype 3 (strain JL03), this protein is 23S rRNA (uracil(747)-C(5))-methyltransferase RlmC.